The following is a 417-amino-acid chain: Methyltransferase/ribosomally synthesized cyclic peptide lentinulin A precursor ledMA (417 aa).

The segment at 1 to 251 is methyltransferase domain; sequence METPTLNKSG…GVSTFYIPPK (251 aa). Residues R72, Y76, and Y98 contribute to the active site. S-adenosyl-L-methionine is bound by residues Y98, H100, V103, A130, Q172, A213, S244, and T245. Positions 252 to 378 are clasp domain; sequence ERKEINVDII…WAFRCAMKEM (127 aa). The precursor leader stretch occupies residues 379–399; sequence PISLLDNAKQSMEEASEQGFP. An N-methylisoleucine modification is found at I401. An N-methylvaline mark is found at V403 and V404. G405 carries the post-translational modification N-methylglycine. 2 positions are modified to N-methylvaline: V406 and V407. G408 carries the post-translational modification N-methylglycine. Position 410 is an N-methylvaline (V410). G411 carries the post-translational modification N-methylglycine. At V413 the chain carries N-methylvaline.

This sequence in the N-terminal section; belongs to the precorrin methyltransferase family. Homodimer. In terms of processing, ledMA automethylates at Ile-401, Val-403, Val-404, Gly-405, Val-406, Val-407, Gly-408, Val-410, Gly-411 and Val-413 before being processed by the prolyloligopeptidase ledP which likely forms a peptidyl ester upon removal of the follower propeptide, which then undergoes macrocyclization with the N-terminus of the modified core peptide. Peptide backbone alpha-N-methylations change the physicochemical properties of amide bonds to provide structural constraints and other favorable characteristics including biological membrane permeability to peptides.

It functions in the pathway mycotoxin biosynthesis. Functionally, fusion protein of the methyltransferase ledM and the lentinulin A core peptide; part of the gene cluster that mediates the biosynthesis of lentinulin A, a highly methylated cyclic dodecapeptide with nematodicidal activity. Lentinulin A derives from the C-terminus of the ledMA protein, and it is the ledMA protein that methylates its own C-terminus using S-adenosyl methionine (SAM). The C-terminus is subsequently cleaved off and macrocyclized by the prolyloligopeptidase ledP to give the final product. This is Methyltransferase/ribosomally synthesized cyclic peptide lentinulin A precursor ledMA from Lentinula edodes (Shiitake mushroom).